The chain runs to 355 residues: Alanine racemase (355 aa).

The Proton acceptor; specific for D-alanine role is filled by lysine 34. N6-(pyridoxal phosphate)lysine is present on lysine 34. Residue arginine 133 participates in substrate binding. Tyrosine 249 serves as the catalytic Proton acceptor; specific for L-alanine. A substrate-binding site is contributed by methionine 297.

This sequence belongs to the alanine racemase family. It depends on pyridoxal 5'-phosphate as a cofactor.

The enzyme catalyses L-alanine = D-alanine. It functions in the pathway amino-acid biosynthesis; D-alanine biosynthesis; D-alanine from L-alanine: step 1/1. Its function is as follows. Catalyzes the interconversion of L-alanine and D-alanine. May also act on other amino acids. The protein is Alanine racemase (alr) of Rickettsia akari (strain Hartford).